The chain runs to 124 residues: Cholera enterotoxin subunit B (124 aa).

The first 21 residues, 1-21 (MIKLKFGVFFTVLLSSAYAHG), serve as a signal peptide directing secretion. A disulfide bridge connects residues C30 and C107.

As to quaternary structure, the holotoxin (choleragen) consists of a pentameric ring of B subunits whose central pore is occupied by the A subunit. The A subunit contains two chains, A1 and A2, linked by a disulfide bridge.

It localises to the secreted. The protein resides in the host cell membrane. The B subunit pentameric ring directs the A subunit to its target by binding to the GM1 gangliosides present on the surface of the intestinal epithelial cells. It can bind five GM1 gangliosides. It has no toxic activity by itself. This chain is Cholera enterotoxin subunit B (ctxB), found in Vibrio cholerae serotype O1 (strain ATCC 39315 / El Tor Inaba N16961).